The primary structure comprises 170 residues: Small ribosomal subunit protein mS25 (170 aa).

The protein belongs to the mitochondrion-specific ribosomal protein mS25 family. As to quaternary structure, component of the mitochondrial ribosome small subunit (28S) which comprises a 12S rRNA and about 30 distinct proteins.

It localises to the mitochondrion. The chain is Small ribosomal subunit protein mS25 (mrps-25) from Caenorhabditis elegans.